The sequence spans 192 residues: uncharacterized protein (192 aa).

The region spanning 72–192 (GATVLLIVPP…SLVISEFSLV (121 aa)) is the B12-binding domain.

This is an uncharacterized protein from Rhodobacter capsulatus (Rhodopseudomonas capsulata).